A 724-amino-acid polypeptide reads, in one-letter code: Protein BCH1 (724 aa).

A compositionally biased stretch (low complexity) spans 51-65 (TTATASANDNGATSN). The interval 51 to 71 (TTATASANDNGATSNINGQDP) is disordered. Residues 711-724 (LNFLKNFTNDTFDN) form a CHS5-binding region.

It belongs to the CHAPS family. In terms of assembly, component of the CHS5/6 complex composed of the 4 CHAPS proteins BCH1, BCH2, BUD7, and CHS6 as well as at least CHS5 and GTP-bound ARF1. The complex interacts with the cargo protein CHS3.

The protein resides in the golgi apparatus. Its subcellular location is the trans-Golgi network membrane. In terms of biological role, member of the CHS5-ARF1P-binding proteins (CHAPS) which mediates export of specific cargo proteins, including chitin synthase CHS3. The polypeptide is Protein BCH1 (BCH1) (Saccharomyces cerevisiae (strain ATCC 204508 / S288c) (Baker's yeast)).